A 156-amino-acid chain; its full sequence is Arginine repressor (156 aa).

This sequence belongs to the ArgR family.

The protein localises to the cytoplasm. The protein operates within amino-acid biosynthesis; L-arginine biosynthesis [regulation]. Regulates arginine biosynthesis genes. The polypeptide is Arginine repressor (Shewanella baltica (strain OS223)).